The following is a 670-amino-acid chain: Oxidoreductase PigB (670 aa).

Residues 1–19 form the signal peptide; that stretch reads MIIQRLFGILYMLAGLAKA. 4 helical membrane passes run 53-73, 76-96, 98-118, and 238-258; these read GDVINILVGVVLFGSGVILML, LWTTLVIYAQLLMMAVFVVIL, QSQPQVMLLDGVFALAALYML, and LVFFDTFLLLKCLGEIVVGFI.

This sequence belongs to the flavin monoamine oxidase family. FAD serves as cofactor.

The protein localises to the membrane. It functions in the pathway antibiotic biosynthesis; prodigiosin biosynthesis. In terms of biological role, involved in the biosynthesis of 2-methyl-3-n-amyl-pyrrole (MAP), one of the terminal products involved in the biosynthesis of the red antibiotic prodigiosin (Pig). Catalyzes the oxidation of dihydro form of MAP (H2MAP) to yield MAP. The polypeptide is Oxidoreductase PigB (Serratia sp. (strain ATCC 39006) (Prodigiosinella confusarubida)).